The chain runs to 425 residues: Serine--tRNA ligase (425 aa).

230-232 (TAE) contributes to the L-serine binding site. An ATP-binding site is contributed by 261–263 (RSE). An L-serine-binding site is contributed by glutamate 284. Residue 348-351 (EISS) coordinates ATP. Residue serine 384 coordinates L-serine.

This sequence belongs to the class-II aminoacyl-tRNA synthetase family. Type-1 seryl-tRNA synthetase subfamily. As to quaternary structure, homodimer. The tRNA molecule binds across the dimer.

It is found in the cytoplasm. It catalyses the reaction tRNA(Ser) + L-serine + ATP = L-seryl-tRNA(Ser) + AMP + diphosphate + H(+). It carries out the reaction tRNA(Sec) + L-serine + ATP = L-seryl-tRNA(Sec) + AMP + diphosphate + H(+). It participates in aminoacyl-tRNA biosynthesis; selenocysteinyl-tRNA(Sec) biosynthesis; L-seryl-tRNA(Sec) from L-serine and tRNA(Sec): step 1/1. Its function is as follows. Catalyzes the attachment of serine to tRNA(Ser). Is also able to aminoacylate tRNA(Sec) with serine, to form the misacylated tRNA L-seryl-tRNA(Sec), which will be further converted into selenocysteinyl-tRNA(Sec). This Streptococcus sanguinis (strain SK36) protein is Serine--tRNA ligase.